A 461-amino-acid chain; its full sequence is MRVLIKNGTVVNADGQAKQDLLIESGIVRQLGNNISPQLPYEEIDATGCYVFPGGVDVHTHFNIDVGIARSCDDFFTGTRAAACGGTTTIIDHMGFGPNGCRLRHQLEVYRGYAAHKAVIDYSFHGVIQHINHAILDEIPMMVEEGLSSFKLYLTYQYKLNDDEVLQALRRLHESGALTTVHPENDAAIASKRAEFIAAGLTAPRYHALSRPLECEAEAIARMINLAQIAGNAPLYIVHLSNGLGLDYLRLARANHQPVWVETCPQYLLLDERSYDTEDGMKFILSPPLRNVREQDKLWCGISDGAIDVVATDHCTFSMAQRLQISKGDFSRCPNGLPGVENRMQLLFSSGVMTGRITPERFVELTSAMPARLFGLWPQKGLLAPGSDGDVVIIDPRQSQQIQHRHLHDNADYSPWEGFTCQGAIVRTLSRGETIFCDGTFTGKAGRGRFLRRKPFVPPVL.

A divalent metal cation contacts are provided by H59, H61, and K151. K151 bears the N6-carboxylysine mark. Y156 provides a ligand contact to substrate. A divalent metal cation is bound by residues H182 and H239. S286 serves as a coordination point for substrate. Position 313 (D313) interacts with a divalent metal cation. N335 lines the substrate pocket.

Belongs to the metallo-dependent hydrolases superfamily. Hydantoinase/dihydropyrimidinase family. In terms of assembly, homotetramer. The cofactor is a divalent metal cation. In terms of processing, carboxylation allows a single lysine to coordinate two divalent metal cations.

It catalyses the reaction D-5-phenylhydantoin + H2O = N-carbamoyl-D-phenylglycine + H(+). Its function is as follows. Catalyzes the stereospecific hydrolysis of the cyclic amide bond of D-hydantoin derivatives with an aromatic side chains at the 5'-position. Has no activity on dihydropyrimidines. The physiological function is unknown. This is D-phenylhydantoinase from Shigella boydii serotype 4 (strain Sb227).